The chain runs to 403 residues: Exodeoxyribonuclease 7 large subunit (403 aa).

Belongs to the XseA family. In terms of assembly, heterooligomer composed of large and small subunits.

It is found in the cytoplasm. It carries out the reaction Exonucleolytic cleavage in either 5'- to 3'- or 3'- to 5'-direction to yield nucleoside 5'-phosphates.. Its function is as follows. Bidirectionally degrades single-stranded DNA into large acid-insoluble oligonucleotides, which are then degraded further into small acid-soluble oligonucleotides. In Clostridium botulinum (strain Okra / Type B1), this protein is Exodeoxyribonuclease 7 large subunit.